A 231-amino-acid chain; its full sequence is 2-C-methyl-D-erythritol 4-phosphate cytidylyltransferase (231 aa).

It belongs to the IspD/TarI cytidylyltransferase family. IspD subfamily.

The catalysed reaction is 2-C-methyl-D-erythritol 4-phosphate + CTP + H(+) = 4-CDP-2-C-methyl-D-erythritol + diphosphate. It functions in the pathway isoprenoid biosynthesis; isopentenyl diphosphate biosynthesis via DXP pathway; isopentenyl diphosphate from 1-deoxy-D-xylulose 5-phosphate: step 2/6. In terms of biological role, catalyzes the formation of 4-diphosphocytidyl-2-C-methyl-D-erythritol from CTP and 2-C-methyl-D-erythritol 4-phosphate (MEP). The chain is 2-C-methyl-D-erythritol 4-phosphate cytidylyltransferase from Dictyoglomus thermophilum (strain ATCC 35947 / DSM 3960 / H-6-12).